Here is a 153-residue protein sequence, read N- to C-terminus: Riboflavin synthase (153 aa).

This sequence belongs to the DMRL synthase family.

It catalyses the reaction 2 6,7-dimethyl-8-(1-D-ribityl)lumazine + H(+) = 5-amino-6-(D-ribitylamino)uracil + riboflavin. Its pathway is cofactor biosynthesis; riboflavin biosynthesis; riboflavin from 2-hydroxy-3-oxobutyl phosphate and 5-amino-6-(D-ribitylamino)uracil: step 2/2. The polypeptide is Riboflavin synthase (ribC) (Archaeoglobus fulgidus (strain ATCC 49558 / DSM 4304 / JCM 9628 / NBRC 100126 / VC-16)).